We begin with the raw amino-acid sequence, 40 residues long: Chaperonin HSP60, mitochondrial (40 aa).

The protein belongs to the chaperonin (HSP60) family.

It is found in the mitochondrion. Implicated in mitochondrial protein import and macromolecular assembly. May facilitate the correct folding of imported proteins. May also prevent misfolding and promote the refolding and proper assembly of unfolded polypeptides generated under stress conditions in the mitochondrial matrix. This Solanum tuberosum (Potato) protein is Chaperonin HSP60, mitochondrial.